Consider the following 197-residue polypeptide: Putative phosphopantothenoylcysteine decarboxylase (197 aa).

Residues F52 and 102–105 (SANT) contribute to the FMN site. N139 provides a ligand contact to substrate. Catalysis depends on C174, which acts as the Proton donor.

The protein belongs to the HFCD (homooligomeric flavin containing Cys decarboxylase) superfamily. Homotrimer. FMN serves as cofactor.

It carries out the reaction N-[(R)-4-phosphopantothenoyl]-L-cysteine + H(+) = (R)-4'-phosphopantetheine + CO2. The protein operates within cofactor biosynthesis; coenzyme A biosynthesis; CoA from (R)-pantothenate: step 3/5. Its function is as follows. Necessary for the biosynthesis of coenzyme A. Catalyzes the decarboxylation of 4-phosphopantothenoylcysteine to form 4'-phosphopantotheine. The chain is Putative phosphopantothenoylcysteine decarboxylase (ppcdc) from Dictyostelium discoideum (Social amoeba).